Consider the following 346-residue polypeptide: DNA repair protein XRCC3 (346 aa).

Met-1 is modified (N-acetylmethionine). Residue 107 to 114 (GRSSAGKT) participates in ATP binding.

The protein belongs to the RecA family. RAD51 subfamily. Interacts with RAD51C and RAD51. Part of the CX3 complex consisting of RAD51C and XRCC3; the complex has a ring-like structure arranged into a flat disk around a central channel; CX3 can interact with RAD51 in vitro. Forms a complex with FANCD2, BRCA2 and phosphorylated FANCG. Interacts with SWSAP1 and ZSWIM7; involved in homologous recombination repair. Interacts directly with PALB2 which may serve as a scaffold for a HR complex containing PALB2, BRCA2, RAD51C, RAD51 and XRCC3.

The protein localises to the nucleus. It is found in the cytoplasm. Its subcellular location is the perinuclear region. The protein resides in the mitochondrion. Involved in the homologous recombination repair (HRR) pathway of double-stranded DNA, thought to repair chromosomal fragmentation, translocations and deletions. Part of the RAD51 paralog protein complex CX3 which acts in the BRCA1-BRCA2-dependent HR pathway. Upon DNA damage, CX3 acts downstream of RAD51 recruitment; the complex binds predominantly to the intersection of the four duplex arms of the Holliday junction (HJ) and to junctions of replication forks. Involved in HJ resolution and thus in processing HR intermediates late in the DNA repair process; the function may be linked to the CX3 complex and seems to involve GEN1 during mitotic cell cycle progression. Part of a PALB2-scaffolded HR complex containing BRCA2 and RAD51C and which is thought to play a role in DNA repair by HR. Plays a role in regulating mitochondrial DNA copy number under conditions of oxidative stress in the presence of RAD51 and RAD51C. The polypeptide is DNA repair protein XRCC3 (XRCC3) (Homo sapiens (Human)).